A 646-amino-acid polypeptide reads, in one-letter code: MGKIIGIDLGTTNSCVSVMEGGEPVVIPNSEGGRTTPSIVGFTSKDERVVGQPAKNQMITNPERTVYSVKRFIGHRYSELTDELKRVPYKIVPQGEDVRIDIDGKLYSTQEISAFILQKMKKTAEDYLGETVTEAVITVPAYFNDAQRQATKDAGKIAGLEVKRIINEPTAASLAFGFNKDSKKEKTIAVYDLGGGTFDISILELGDGVFEVKSTNGDTHLGGDDFDNRIVNWLVDEFKKDTGIDLSKDRMALQRLREAAEKAKIELSSVANTEVNLPFITADANGPKHLQKSLSRAKFEQMTEDLFERTKEPCRKALKDAGITPDKIDDILLVGGSTRMPKVLQIIKEIFGKEGSKSVNPDEAVAMGAAIQGGILGGDVKDVLLLDVTPLSLGIETMGGVFTPLINRNTTIPTRKSQVFSTAADGQTAVSIHVLQGERGMASQNRTLGNFDLVGIPPAPRGVPQIEVTFDIDANGIVHVSAKDLGTGKEQHIRIESSSGLSESEIDRMVKEAEANAENDKLEKEKVEAKNNADSLIYQTEKTLKEMGDKIGAADKQKIEAAIADLRQALNSDNTADIKAKTENLQQAAYKIAEEMYKQQGAQAGADPNAGSSQGAQAGTDYGTSGPKTGTADDVDYEVVNDDNDK.

Residue T197 is modified to Phosphothreonine; by autocatalysis. The disordered stretch occupies residues 599–646; the sequence is QQGAQAGADPNAGSSQGAQAGTDYGTSGPKTGTADDVDYEVVNDDNDK. Positions 610 to 628 are enriched in polar residues; that stretch reads AGSSQGAQAGTDYGTSGPK. Acidic residues predominate over residues 633–646; sequence DDVDYEVVNDDNDK.

The protein belongs to the heat shock protein 70 family.

Its function is as follows. Acts as a chaperone. The sequence is that of Chaperone protein DnaK from Treponema denticola (strain ATCC 35405 / DSM 14222 / CIP 103919 / JCM 8153 / KCTC 15104).